Here is a 545-residue protein sequence, read N- to C-terminus: Prolyl 3-hydroxylase OGFOD1 (545 aa).

The disordered stretch occupies residues 1-23 (MNGKRPADPGPARPMKKGKKQVS). The 103-residue stretch at 137 to 239 (PTIDMSCAKY…RLSISGWFYG (103 aa)) folds into the Fe2OG dioxygenase domain. Residues histidine 155 and aspartate 157 each contribute to the Fe cation site. Tyrosine 169 contacts 2-oxoglutarate. Position 218 (histidine 218) interacts with Fe cation. A 2-oxoglutarate-binding site is contributed by arginine 230. The segment covering 371 to 380 (SEDDETEEKG) has biased composition (acidic residues). Positions 371 to 437 (SEDDETEEKG…EAKKESSVPM (67 aa)) are disordered. A compositionally biased stretch (low complexity) spans 383–393 (ETASAAAGTEE). Positions 402 to 417 (PENNQVAAGSHSQENG) are enriched in polar residues.

This sequence belongs to the TPA1 family. As to quaternary structure, monomer. It depends on Fe(2+) as a cofactor. L-ascorbate serves as cofactor.

It is found in the cytoplasm. It localises to the nucleus. It catalyses the reaction [ribosomal protein uS12]-L-proline + 2-oxoglutarate + O2 = [ribosomal protein uS12]-(3S)-3-hydroxy-L-proline + succinate + CO2. Prolyl 3-hydroxylase that catalyzes 3-hydroxylation of 'Pro-62' of small ribosomal subunit uS12 (RPS23), thereby regulating protein translation termination efficiency. Involved in stress granule formation. The sequence is that of Prolyl 3-hydroxylase OGFOD1 (Ogfod1) from Mus musculus (Mouse).